A 40-amino-acid polypeptide reads, in one-letter code: Large ribosomal subunit protein bL36 (40 aa).

It belongs to the bacterial ribosomal protein bL36 family.

This chain is Large ribosomal subunit protein bL36, found in Corynebacterium urealyticum (strain ATCC 43042 / DSM 7109).